The following is a 470-amino-acid chain: Cyclin-B1-3 (470 aa).

This sequence belongs to the cyclin family. Cyclin AB subfamily.

This Oryza sativa subsp. japonica (Rice) protein is Cyclin-B1-3 (CYCB1-3).